Reading from the N-terminus, the 131-residue chain is Holo-[acyl-carrier-protein] synthase (131 aa).

Residues aspartate 8 and glutamate 59 each coordinate Mg(2+).

The protein belongs to the P-Pant transferase superfamily. AcpS family. The cofactor is Mg(2+).

It is found in the cytoplasm. It catalyses the reaction apo-[ACP] + CoA = holo-[ACP] + adenosine 3',5'-bisphosphate + H(+). In terms of biological role, transfers the 4'-phosphopantetheine moiety from coenzyme A to a Ser of acyl-carrier-protein. This Rickettsia felis (strain ATCC VR-1525 / URRWXCal2) (Rickettsia azadi) protein is Holo-[acyl-carrier-protein] synthase.